Here is a 173-residue protein sequence, read N- to C-terminus: RNA pyrophosphohydrolase (173 aa).

The Nudix hydrolase domain maps to 6-149 (GFRANVGIIL…KRGVYRRALQ (144 aa)). The short motif at 38 to 59 (GGIDRGETPMDAMYRELWEEVG) is the Nudix box element.

The protein belongs to the Nudix hydrolase family. RppH subfamily. It depends on a divalent metal cation as a cofactor.

Its function is as follows. Accelerates the degradation of transcripts by removing pyrophosphate from the 5'-end of triphosphorylated RNA, leading to a more labile monophosphorylated state that can stimulate subsequent ribonuclease cleavage. The chain is RNA pyrophosphohydrolase from Psychrobacter arcticus (strain DSM 17307 / VKM B-2377 / 273-4).